A 442-amino-acid chain; its full sequence is Glutamate-1-semialdehyde 2,1-aminomutase (442 aa).

Residue Lys282 is modified to N6-(pyridoxal phosphate)lysine.

It belongs to the class-III pyridoxal-phosphate-dependent aminotransferase family. HemL subfamily. Homodimer. Pyridoxal 5'-phosphate serves as cofactor.

It localises to the cytoplasm. It carries out the reaction (S)-4-amino-5-oxopentanoate = 5-aminolevulinate. It participates in porphyrin-containing compound metabolism; protoporphyrin-IX biosynthesis; 5-aminolevulinate from L-glutamyl-tRNA(Glu): step 2/2. This is Glutamate-1-semialdehyde 2,1-aminomutase from Polaromonas sp. (strain JS666 / ATCC BAA-500).